Here is a 92-residue protein sequence, read N- to C-terminus: UPF0235 protein PF1765 (92 aa).

The protein belongs to the UPF0235 family.

This is UPF0235 protein PF1765 from Pyrococcus furiosus (strain ATCC 43587 / DSM 3638 / JCM 8422 / Vc1).